Reading from the N-terminus, the 76-residue chain is Exodeoxyribonuclease 7 small subunit (76 aa).

It belongs to the XseB family. Heterooligomer composed of large and small subunits.

It is found in the cytoplasm. The catalysed reaction is Exonucleolytic cleavage in either 5'- to 3'- or 3'- to 5'-direction to yield nucleoside 5'-phosphates.. Functionally, bidirectionally degrades single-stranded DNA into large acid-insoluble oligonucleotides, which are then degraded further into small acid-soluble oligonucleotides. In Staphylococcus aureus (strain Mu3 / ATCC 700698), this protein is Exodeoxyribonuclease 7 small subunit.